The following is a 339-amino-acid chain: MRKKLEQIKENAFKELQDKRKDLDIESIRIKYLGKKGELTHILRGMKELSKEERPIIGKLANDIRTALENAIEEASQRIKSSERESRVKGETIDITMPGIKQNIGRRHPLEQVLEDMKEIFVSMGFTIEEGPEVELDYYNFEALNIPKNHPARGEQDTFYINDNLVLRTQTSPTQIRTMEKQKPPIKMISPGKVYRSDSVDATHSPIFYQMEGLVVDKGITFADLKGTLELFARKMFGDEMKTKFRPHHFPFTEPSAEMDATCFVCNGEGCRVCKGEGWIELLGCGMVHPQVLRNCNIDPEVYSGFAFGMGVDRMVMLKYGIDDIRNMYESDMRFLNQF.

A Mg(2+)-binding site is contributed by Glu-254.

This sequence belongs to the class-II aminoacyl-tRNA synthetase family. Phe-tRNA synthetase alpha subunit type 1 subfamily. As to quaternary structure, tetramer of two alpha and two beta subunits. Mg(2+) is required as a cofactor.

It is found in the cytoplasm. The catalysed reaction is tRNA(Phe) + L-phenylalanine + ATP = L-phenylalanyl-tRNA(Phe) + AMP + diphosphate + H(+). The protein is Phenylalanine--tRNA ligase alpha subunit of Clostridium kluyveri (strain ATCC 8527 / DSM 555 / NBRC 12016 / NCIMB 10680 / K1).